We begin with the raw amino-acid sequence, 938 residues long: Collagen alpha-1(I) chain (938 aa).

The segment at 1 to 938 (GGISVPGPMG…PGPPGPPGPP (938 aa)) is disordered. Residues Pro-18, Pro-21, Pro-24, Pro-33, Pro-36, Pro-39, Pro-54, Pro-69, Pro-75, Pro-84, and Pro-90 each carry the 4-hydroxyproline modification. Positions 26-45 (PQGFQGPPGEPGEPGASGPM) are enriched in low complexity. Over residues 57–71 (NGDDGEAGKPGRPGE) the composition is skewed to basic and acidic residues. At Lys-93 the chain carries 5-hydroxylysine; alternate. An O-linked (Gal...) hydroxylysine; alternate glycan is attached at Lys-93. Ser-99 carries the post-translational modification Phosphoserine. Residues 107 to 135 (DAGPAGPKGRPGASGPAGARGNDGATGAA) show a composition bias toward low complexity. A 4-hydroxyproline mark is found at Pro-117, Pro-138, Pro-147, Pro-150, Pro-177, Pro-180, Pro-192, Pro-198, Pro-207, Pro-213, Pro-216, and Pro-231. The span at 137–149 (PPGPTGPAGPPGF) shows a compositional bias: pro residues. The segment covering 183–222 (AGAAGPAGNPGADGQPGAKGANGAPGIAGAPGFPGARGPS) has biased composition (low complexity). The residue at position 234 (Lys-234) is a 5-hydroxylysine. 4-hydroxyproline occurs at positions 240, 243, 255, 264, 279, 285, 294, and 300. Residues 289-298 (GERGGPGSRG) show a composition bias toward gly residues. Lys-309 carries the 5-hydroxylysine modification. 4-hydroxyproline is present on residues Pro-314, Pro-323, Pro-329, Pro-335, Pro-344, Pro-347, Pro-356, Pro-365, Pro-371, Pro-383, Pro-392, Pro-401, Pro-404, Pro-422, Pro-439, Pro-445, Pro-451, Pro-458, Pro-464, Pro-476, Pro-485, Pro-497, Pro-503, Pro-509, and Pro-518. The span at 338–364 (KGLTGSPGSPGPDGKTGPPGPAGQDGR) shows a compositional bias: low complexity. Low complexity predominate over residues 373 to 392 (ARGQAGVMGFPGPKGAAGEP). Lys-530 is modified (5-hydroxylysine). A 4-hydroxyproline mark is found at Pro-536, Pro-551, and Pro-557. Over residues 563-577 (SGPSGPAGPTGARGA) the composition is skewed to low complexity. Ser-566 is modified (phosphoserine). Pro-578, Pro-584, Pro-587, Pro-596, Pro-602, Pro-620, Pro-629, and Pro-638 each carry 4-hydroxyproline. Over residues 590 to 617 (AGFAGPPGADGQPGAKGEPGDAGAKGDA) the composition is skewed to low complexity. The span at 619-631 (PPGPAGPTGPPGP) shows a compositional bias: pro residues. Lys-641 is subject to 5-hydroxylysine. Over residues 646-662 (SAGPPGATGFPGAAGRV) the composition is skewed to low complexity. 4-hydroxyproline is present on residues Pro-650 and Pro-656. Pro-664 carries the post-translational modification 3-hydroxyproline. Pro-665, Pro-674, Pro-677, Pro-693, Pro-703, Pro-712, Pro-730, Pro-739, Pro-742, Pro-748, Pro-763, Pro-769, Pro-775, Pro-784, and Pro-790 each carry 4-hydroxyproline. Residues 762–772 (PPGPMGPPGLA) are compositionally biased toward pro residues. Lys-799 carries the post-translational modification 5-hydroxylysine. Positions 807 to 822 (PGPPGAPGAPGAPGPV) are enriched in pro residues. Pro-810, Pro-813, and Pro-816 each carry 4-hydroxyproline. Low complexity predominate over residues 843-867 (AGPAGARGPAGPQGPRRGFSGLQGP). 4 positions are modified to 4-hydroxyproline: Pro-871, Pro-874, Pro-892, and Pro-907. Low complexity predominate over residues 874–907 (PGEQGPSGASGPAGPRGPPGSAGSPGKDGLNGLP). Residue Pro-912 is modified to 3-hydroxyproline. At Pro-913 the chain carries 4-hydroxyproline. Over residues 923-938 (VGPPGPPGPPGPPGPP) the composition is skewed to pro residues. Pro-925 carries the 3-hydroxyproline modification. At Pro-926 the chain carries 4-hydroxyproline. Pro-928 is subject to 3-hydroxyproline. The residue at position 929 (Pro-929) is a 4-hydroxyproline. Pro-931 bears the 3-hydroxyproline mark. A 4-hydroxyproline mark is found at Pro-932, Pro-935, and Pro-938.

Belongs to the fibrillar collagen family. As to quaternary structure, trimers of one alpha 2(I) and two alpha 1(I) chains. Post-translationally, contains mostly 4-hydroxyproline. Proline residues at the third position of the tripeptide repeating unit (G-X-Y) are hydroxylated in some or all of the chains. In terms of processing, contains 3-hydroxyproline at a few sites. This modification occurs on the first proline residue in the sequence motif Gly-Pro-Hyp, where Hyp is 4-hydroxyproline. Lysine residues at the third position of the tripeptide repeating unit (G-X-Y) are 5-hydroxylated in some or all of the chains. Post-translationally, O-glycosylated on hydroxylated lysine residues. The O-linked glycan consists of a Glc-Gal disaccharide. Expressed in bones.

The protein localises to the secreted. It is found in the extracellular space. The protein resides in the extracellular matrix. Its function is as follows. Type I collagen is a member of group I collagen (fibrillar forming collagen). The polypeptide is Collagen alpha-1(I) chain (Megalonyx jeffersonii (Jefferson's ground sloth)).